Reading from the N-terminus, the 228-residue chain is Ribose-5-phosphate isomerase A (228 aa).

Substrate-binding positions include T27–T30, D86–D89, and K100–G103. The active-site Proton acceptor is the E109. K127 contributes to the substrate binding site.

This sequence belongs to the ribose 5-phosphate isomerase family. In terms of assembly, homodimer.

The catalysed reaction is aldehydo-D-ribose 5-phosphate = D-ribulose 5-phosphate. It functions in the pathway carbohydrate degradation; pentose phosphate pathway; D-ribose 5-phosphate from D-ribulose 5-phosphate (non-oxidative stage): step 1/1. Functionally, catalyzes the reversible conversion of ribose-5-phosphate to ribulose 5-phosphate. The protein is Ribose-5-phosphate isomerase A of Borrelia hermsii (strain HS1 / DAH).